The chain runs to 254 residues: NAD-dependent protein deacylase 2 (254 aa).

The Deacetylase sirtuin-type domain occupies 1–254 (MDEHSIMQAV…LPALVRRLGV (254 aa)). Residue 24 to 44 (GAGMSADSGLETYRDPETGVW) coordinates NAD(+). Substrate-binding residues include Tyr-69 and Arg-72. Residue 105–108 (QNID) coordinates NAD(+). His-123 (proton acceptor) is an active-site residue. Zn(2+)-binding residues include Cys-131, Cys-134, Cys-157, and Cys-160. NAD(+)-binding positions include 197–199 (GTS) and Ala-241.

This sequence belongs to the sirtuin family. Class III subfamily. Requires Zn(2+) as cofactor.

It localises to the cytoplasm. It catalyses the reaction N(6)-acetyl-L-lysyl-[protein] + NAD(+) + H2O = 2''-O-acetyl-ADP-D-ribose + nicotinamide + L-lysyl-[protein]. The enzyme catalyses N(6)-succinyl-L-lysyl-[protein] + NAD(+) + H2O = 2''-O-succinyl-ADP-D-ribose + nicotinamide + L-lysyl-[protein]. NAD-dependent lysine deacetylase and desuccinylase that specifically removes acetyl and succinyl groups on target proteins. Modulates the activities of several proteins which are inactive in their acylated form. The protein is NAD-dependent protein deacylase 2 of Corynebacterium efficiens (strain DSM 44549 / YS-314 / AJ 12310 / JCM 11189 / NBRC 100395).